The primary structure comprises 545 residues: Membrane protein insertase YidC (545 aa).

6 helical membrane-spanning segments follow: residues 10–30 (AVYL…FLFS), 319–339 (LLYF…NVIP), 341–361 (WGLS…PLTF), 407–427 (IGGC…YGLV), 467–487 (ILPF…SNVS), and 502–522 (MPIM…IYWI).

The protein belongs to the OXA1/ALB3/YidC family. Type 1 subfamily. As to quaternary structure, interacts with the Sec translocase complex via SecD. Specifically interacts with transmembrane segments of nascent integral membrane proteins during membrane integration.

The protein localises to the cell inner membrane. Its function is as follows. Required for the insertion and/or proper folding and/or complex formation of integral membrane proteins into the membrane. Involved in integration of membrane proteins that insert both dependently and independently of the Sec translocase complex, as well as at least some lipoproteins. Aids folding of multispanning membrane proteins. The sequence is that of Membrane protein insertase YidC from Borrelia recurrentis (strain A1).